Consider the following 221-residue polypeptide: Ras-related protein RabS (221 aa).

GTP is bound at residue 16–23; sequence GDNQCGKS. The short motif at 38–47 is the Effector region element; the sequence is GIQLWHGIEI. Residues 71-75 and 137-140 each bind GTP; these read DGNGG and NKCD. Cys-218 bears the Cysteine methyl ester mark. Cys-218 carries S-geranylgeranyl cysteine lipidation. Residues 219-221 constitute a propeptide, removed in mature form; the sequence is IIN.

This sequence belongs to the small GTPase superfamily. Rab family.

The protein localises to the cell membrane. This chain is Ras-related protein RabS (rabS), found in Dictyostelium discoideum (Social amoeba).